We begin with the raw amino-acid sequence, 244 residues long: MSKLDLNALNELPKVDRVLALAETNAQLETLTAEERVAWALENLPGEYVLSSSFGIQAAVSLHLVNQIRPDIPVILTDTGYLFPETYQFIDELTDKLKLNLKVYRAGESPAWQEARYGKLWEQGVEGIEKYNEINKVEPMNRALKELKAQTWFAGLRREQSGSRAHLPVLAIQRGVFKVLPIIDWDNRTVYQYLQKHGLKYHPLWDQGYLSVGDTHTTRKWEPGMAEEETRFFGLKRECGLHEG.

Cys-239 acts as the Nucleophile; cysteine thiosulfonate intermediate in catalysis.

This sequence belongs to the PAPS reductase family. CysH subfamily.

It is found in the cytoplasm. The enzyme catalyses [thioredoxin]-disulfide + sulfite + adenosine 3',5'-bisphosphate + 2 H(+) = [thioredoxin]-dithiol + 3'-phosphoadenylyl sulfate. Its pathway is sulfur metabolism; hydrogen sulfide biosynthesis; sulfite from sulfate: step 3/3. Its function is as follows. Catalyzes the formation of sulfite from phosphoadenosine 5'-phosphosulfate (PAPS) using thioredoxin as an electron donor. The sequence is that of Phosphoadenosine 5'-phosphosulfate reductase from Salmonella dublin (strain CT_02021853).